We begin with the raw amino-acid sequence, 343 residues long: Aspartate carbamoyltransferase catalytic subunit (343 aa).

Residues Arg-91 and Thr-92 each contribute to the carbamoyl phosphate site. Lys-119 lines the L-aspartate pocket. Carbamoyl phosphate is bound by residues Arg-141, His-171, and Gln-174. Arg-204 and Arg-259 together coordinate L-aspartate. Carbamoyl phosphate contacts are provided by Gly-300 and Pro-301.

It belongs to the aspartate/ornithine carbamoyltransferase superfamily. ATCase family. Heterododecamer (2C3:3R2) of six catalytic PyrB chains organized as two trimers (C3), and six regulatory PyrI chains organized as three dimers (R2).

The catalysed reaction is carbamoyl phosphate + L-aspartate = N-carbamoyl-L-aspartate + phosphate + H(+). It participates in pyrimidine metabolism; UMP biosynthesis via de novo pathway; (S)-dihydroorotate from bicarbonate: step 2/3. Its function is as follows. Catalyzes the condensation of carbamoyl phosphate and aspartate to form carbamoyl aspartate and inorganic phosphate, the committed step in the de novo pyrimidine nucleotide biosynthesis pathway. The protein is Aspartate carbamoyltransferase catalytic subunit of Burkholderia thailandensis (strain ATCC 700388 / DSM 13276 / CCUG 48851 / CIP 106301 / E264).